The sequence spans 846 residues: Leucine--tRNA ligase (846 aa).

Positions 42 to 52 match the 'HIGH' region motif; it reads PYPSGNLHMGH. The 'KMSKS' region motif lies at 586–590; sequence KMSKS. Lys589 serves as a coordination point for ATP.

The protein belongs to the class-I aminoacyl-tRNA synthetase family.

It localises to the cytoplasm. It carries out the reaction tRNA(Leu) + L-leucine + ATP = L-leucyl-tRNA(Leu) + AMP + diphosphate. This is Leucine--tRNA ligase from Heliobacterium modesticaldum (strain ATCC 51547 / Ice1).